A 66-amino-acid polypeptide reads, in one-letter code: MKTSVLFVIFGLALLLCLSFAAELEDTGRQCGEFMWKCGAGKPTCCSGYDCSPTWKWCVLKSPGRR.

A signal peptide spans 1–21 (MKTSVLFVIFGLALLLCLSFA). The propeptide occupies 22–29 (AELEDTGR). 3 cysteine pairs are disulfide-bonded: Cys-31/Cys-46, Cys-38/Cys-51, and Cys-45/Cys-58.

It belongs to the neurotoxin 10 (Hwtx-1) family. 29 (Jztx-13) subfamily. Expressed by the venom gland.

It localises to the secreted. Functionally, probable ion channel inhibitor. The polypeptide is U10-theraphotoxin-Cg1a 2 (Chilobrachys guangxiensis (Chinese earth tiger tarantula)).